Reading from the N-terminus, the 307-residue chain is Oxygen-dependent coproporphyrinogen-III oxidase (307 aa).

Ser-99 serves as a coordination point for substrate. 2 residues coordinate a divalent metal cation: His-103 and His-113. His-113 (proton donor) is an active-site residue. A substrate-binding site is contributed by 115–117; the sequence is NVR. His-152 and His-182 together coordinate a divalent metal cation. The important for dimerization stretch occupies residues 247 to 282; sequence YVEFNLVFDRGTLFGLQSGGRTESILLSMPPTAGWR. Residue 265 to 267 coordinates substrate; the sequence is GGR.

It belongs to the aerobic coproporphyrinogen-III oxidase family. Homodimer. A divalent metal cation serves as cofactor.

The protein localises to the cytoplasm. It catalyses the reaction coproporphyrinogen III + O2 + 2 H(+) = protoporphyrinogen IX + 2 CO2 + 2 H2O. It participates in porphyrin-containing compound metabolism; protoporphyrin-IX biosynthesis; protoporphyrinogen-IX from coproporphyrinogen-III (O2 route): step 1/1. In terms of biological role, involved in the heme biosynthesis. Catalyzes the aerobic oxidative decarboxylation of propionate groups of rings A and B of coproporphyrinogen-III to yield the vinyl groups in protoporphyrinogen-IX. The sequence is that of Oxygen-dependent coproporphyrinogen-III oxidase from Burkholderia mallei (strain SAVP1).